Consider the following 339-residue polypeptide: GTPase Obg (339 aa).

The region spanning 1–158 (MKFLDQVDLR…RDLTFELKLM (158 aa)) is the Obg domain. 2 disordered regions span residues 66–86 (FAEDGEPGGRREQTGASGEDK) and 125–148 (GNAFFKSSTNQAPRESQPGEPGEE). Over residues 72 to 86 (PGGRREQTGASGEDK) the composition is skewed to basic and acidic residues. Residues 129 to 138 (FKSSTNQAPR) are compositionally biased toward polar residues. Positions 159–329 (ADVGLVGFPN…LKYTLFDTVH (171 aa)) constitute an OBG-type G domain. Residues 165–172 (GFPNAGKS), 190–194 (FTTLT), 212–215 (DIPG), 279–282 (SKID), and 310–312 (SAV) each bind GTP. Residues S172 and T192 each coordinate Mg(2+).

Belongs to the TRAFAC class OBG-HflX-like GTPase superfamily. OBG GTPase family. Monomer. It depends on Mg(2+) as a cofactor.

Its subcellular location is the cytoplasm. Functionally, an essential GTPase which binds GTP, GDP and possibly (p)ppGpp with moderate affinity, with high nucleotide exchange rates and a fairly low GTP hydrolysis rate. Plays a role in control of the cell cycle, stress response, ribosome biogenesis and in those bacteria that undergo differentiation, in morphogenesis control. In Salinibacter ruber (strain DSM 13855 / M31), this protein is GTPase Obg.